The following is a 202-amino-acid chain: Alpha-1-acid glycoprotein (202 aa).

Positions 1–18 (MALLWALAVLSHLPLLDA) are cleaved as a signal peptide. N-linked (GlcNAc...) asparagine glycans are attached at residues asparagine 34, asparagine 57, asparagine 94, asparagine 104, and asparagine 136. A disulfide bridge links cysteine 91 with cysteine 184.

It belongs to the calycin superfamily. Lipocalin family.

It is found in the secreted. Functionally, functions as a transport protein in the blood stream. Binds various ligands in the interior of its beta-barrel domain. Appears to function in modulating the activity of the immune system during the acute-phase reaction. The chain is Alpha-1-acid glycoprotein (ORM1) from Bos taurus (Bovine).